Here is a 60-residue protein sequence, read N- to C-terminus: Small ribosomal subunit protein bS21 (60 aa).

Belongs to the bacterial ribosomal protein bS21 family.

This is Small ribosomal subunit protein bS21 (rpsU) from Mycoplasma pneumoniae (strain ATCC 29342 / M129 / Subtype 1) (Mycoplasmoides pneumoniae).